A 163-amino-acid chain; its full sequence is Ribosome maturation factor RimM (163 aa).

The PRC barrel domain occupies 90-161 (EGRHYWGDLE…VVVDPPEGLL (72 aa)).

The protein belongs to the RimM family. Binds ribosomal protein uS19.

The protein localises to the cytoplasm. Functionally, an accessory protein needed during the final step in the assembly of 30S ribosomal subunit, possibly for assembly of the head region. Essential for efficient processing of 16S rRNA. May be needed both before and after RbfA during the maturation of 16S rRNA. It has affinity for free ribosomal 30S subunits but not for 70S ribosomes. This chain is Ribosome maturation factor RimM, found in Anaeromyxobacter dehalogenans (strain 2CP-C).